A 334-amino-acid polypeptide reads, in one-letter code: Holliday junction branch migration complex subunit RuvB (334 aa).

Residues 4–184 (ADRLISAAVI…FGIVQRLEFY (181 aa)) form a large ATPase domain (RuvB-L) region. ATP contacts are provided by residues I23, R24, G65, K68, T69, T70, 131 to 133 (EDY), R174, Y184, and R221. T69 contacts Mg(2+). The tract at residues 185–255 (QVADLEHIVS…VAMKALDMLN (71 aa)) is small ATPAse domain (RuvB-S). Residues 258 to 334 (AEGFDFMDRK…YKHFGITREE (77 aa)) form a head domain (RuvB-H) region. DNA is bound by residues R294, R313, and R318.

It belongs to the RuvB family. Homohexamer. Forms an RuvA(8)-RuvB(12)-Holliday junction (HJ) complex. HJ DNA is sandwiched between 2 RuvA tetramers; dsDNA enters through RuvA and exits via RuvB. An RuvB hexamer assembles on each DNA strand where it exits the tetramer. Each RuvB hexamer is contacted by two RuvA subunits (via domain III) on 2 adjacent RuvB subunits; this complex drives branch migration. In the full resolvosome a probable DNA-RuvA(4)-RuvB(12)-RuvC(2) complex forms which resolves the HJ.

It is found in the cytoplasm. It catalyses the reaction ATP + H2O = ADP + phosphate + H(+). The RuvA-RuvB-RuvC complex processes Holliday junction (HJ) DNA during genetic recombination and DNA repair, while the RuvA-RuvB complex plays an important role in the rescue of blocked DNA replication forks via replication fork reversal (RFR). RuvA specifically binds to HJ cruciform DNA, conferring on it an open structure. The RuvB hexamer acts as an ATP-dependent pump, pulling dsDNA into and through the RuvAB complex. RuvB forms 2 homohexamers on either side of HJ DNA bound by 1 or 2 RuvA tetramers; 4 subunits per hexamer contact DNA at a time. Coordinated motions by a converter formed by DNA-disengaged RuvB subunits stimulates ATP hydrolysis and nucleotide exchange. Immobilization of the converter enables RuvB to convert the ATP-contained energy into a lever motion, pulling 2 nucleotides of DNA out of the RuvA tetramer per ATP hydrolyzed, thus driving DNA branch migration. The RuvB motors rotate together with the DNA substrate, which together with the progressing nucleotide cycle form the mechanistic basis for DNA recombination by continuous HJ branch migration. Branch migration allows RuvC to scan DNA until it finds its consensus sequence, where it cleaves and resolves cruciform DNA. In Yersinia pseudotuberculosis serotype O:1b (strain IP 31758), this protein is Holliday junction branch migration complex subunit RuvB.